A 373-amino-acid chain; its full sequence is MEKARISIRQLFVMIIIFELGSSLLITPGSMAGRDAWIAVLLGCAIGLFLFYLYQGIYQCYPNSSPKEYMDDMLGTKLSWLFSFLYILYFAYIAARVLRDFGEMLLTFAYHDTPIIIVNALLMVVSIYAVRKGIEVLARAAELLFGAMYLLGAIGLVLIIVSGTIDPHNLKPVLANGISPVLHSVFTQTMYVPFGEVVLFVMIFPNLNDRKDVKKMGMIAMAISGLIVALTVAINISVLDVDLTLRSQFPLLSTIQTIKVEEFLDRLDVFFMLALIIGGFFKVSLYLYATVVGTSTLFKEKNPSQLAYPMGLGILILSITIATNFSEHLNEGLNVVPLYIHLPFQLLFPLFLFIVAVWKKKRREKSKGEEAKK.

The next 10 membrane-spanning stretches (helical) occupy residues 11–31 (LFVM…PGSM), 37–57 (WIAV…YQGI), 78–98 (LSWL…ARVL), 105–125 (LLTF…LMVV), 143–163 (LLFG…IVSG), 185–205 (VFTQ…MIFP), 219–239 (IAMA…ISVL), 269–289 (VFFM…YLYA), 306–326 (LAYP…TNFS), and 338–358 (LYIH…VAVW).

It belongs to the amino acid-polyamine-organocation (APC) superfamily. Spore germination protein (SGP) (TC 2.A.3.9) family.

It localises to the cell membrane. Its function is as follows. Involved in the germination response to the combination of glucose, fructose, L-asparagine, and KCl. In Bacillus subtilis (strain 168), this protein is Spore germination protein KB (gerKB).